We begin with the raw amino-acid sequence, 412 residues long: Acetate kinase (412 aa).

Residue asparagine 10 coordinates Mg(2+). Lysine 17 lines the ATP pocket. Residues 40 to 61 (ETSRLAHTPSAGGGAEPRERTG) form a disordered region. Arginine 95 contacts substrate. Aspartate 152 serves as the catalytic Proton donor/acceptor. Residues 212–216 (HLGNG), 286–288 (DMR), and 334–338 (GVGEN) contribute to the ATP site. Residue glutamate 388 participates in Mg(2+) binding.

The protein belongs to the acetokinase family. Homodimer. The cofactor is Mg(2+). It depends on Mn(2+) as a cofactor.

It localises to the cytoplasm. It carries out the reaction acetate + ATP = acetyl phosphate + ADP. Its pathway is metabolic intermediate biosynthesis; acetyl-CoA biosynthesis; acetyl-CoA from acetate: step 1/2. In terms of biological role, catalyzes the formation of acetyl phosphate from acetate and ATP. Can also catalyze the reverse reaction. This chain is Acetate kinase, found in Streptomyces griseus subsp. griseus (strain JCM 4626 / CBS 651.72 / NBRC 13350 / KCC S-0626 / ISP 5235).